The following is an 84-amino-acid chain: CDC42 small effector protein 2 (84 aa).

2 S-palmitoyl cysteine lipidation sites follow: cysteine 10 and cysteine 11. A CRIB domain is found at 29–42; the sequence is IGEPTNFVHTAHVG. 2 positions are modified to phosphoserine: serine 43 and serine 52.

It belongs to the CDC42SE/SPEC family. Interacts with CDC42 (in GTP-bound form). Interacts weakly with RAC1 and not at all with RHOA.

The protein resides in the cytoplasm. It is found in the cytoskeleton. It localises to the cell membrane. Its subcellular location is the cell projection. The protein localises to the phagocytic cup. Its function is as follows. Probably involved in the organization of the actin cytoskeleton by acting downstream of CDC42, inducing actin filament assembly. Alters CDC42-induced cell shape changes. In activated T-cells, may play a role in CDC42-mediated F-actin accumulation at the immunological synapse. May play a role in early contractile events in phagocytosis in macrophages. This is CDC42 small effector protein 2 (CDC42SE2) from Bos taurus (Bovine).